A 152-amino-acid chain; its full sequence is Protein IpgF (152 aa).

Residues 1–17 (MSRFVFILLCFIPHLGR) form the signal peptide.

This sequence belongs to the IagB/IpgF/P19 family.

The polypeptide is Protein IpgF (ipgF) (Shigella flexneri).